The sequence spans 112 residues: QWLSFLGEAYEGAKDMWRAYSDMREANFKGADKYFHARGNYDAAQRGPGGVWAAEVISNGREALQGITDPLFKGMTRDQVREDTKADQFANEWGRSGKDPNHFRPPGLPDKY.

Residue glutamine 1 is modified to Pyrrolidone carboxylic acid. Over residues methionine 75–alanine 86 the composition is skewed to basic and acidic residues. A disordered region spans residues methionine 75–tyrosine 112.

This sequence belongs to the SAA family. As to expression, expressed by the liver; secreted in plasma.

The protein localises to the secreted. Functionally, major acute phase reactant. Apolipoprotein of the HDL complex. The chain is Serum amyloid A protein (SAA1) from Ovis aries (Sheep).